The following is a 283-amino-acid chain: Beta-glucoside operon antiterminator (283 aa).

2 consecutive PRD domains span residues 65–170 (RIPL…SHMP) and 171–280 (EVMR…LQEQ).

It belongs to the transcriptional antiterminator BglG family. In terms of processing, phosphorylated and inactivated by ArbF (EII-Bgl). The degree of phosphorylation is dependent on the presence or absence of beta-glucosides which act as inducers of the operon expression. Addition of inducer result in the rapid dephosphorylation of ArbG.

In terms of biological role, mediates the positive regulation of the beta-glucoside (arb) operon by functioning as a transcriptional antiterminator. This is an RNA-binding protein that recognizes a specific sequence located just upstream of two termination sites within the operon. In Dickeya chrysanthemi (Pectobacterium chrysanthemi), this protein is Beta-glucoside operon antiterminator (arbG).